The primary structure comprises 414 residues: Apolipoprotein N-acyltransferase (414 aa).

6 helical membrane passes run 19–39, 40–60, 63–83, 91–111, 121–141, and 153–173; these read GIALFGAILFSLFIYLHHFGI, TSPLLYSLLALLALAFYLKLP, SGFAFGFWVGIAWFYWMALSF, LIPFILLGIGGVYGVLFSMAL, LLLWLLSHVQPFGFDWMVPEV, and LSFGLILLSLSLFWLLPQRWL. A CN hydrolase domain is found at 202–414; it reads IETHIPQEIR…NRSPSGIIAP (213 aa). The active-site Proton acceptor is E243. Residue K298 is part of the active site. Catalysis depends on C351, which acts as the Nucleophile.

This sequence belongs to the CN hydrolase family. Apolipoprotein N-acyltransferase subfamily.

It localises to the cell inner membrane. It catalyses the reaction N-terminal S-1,2-diacyl-sn-glyceryl-L-cysteinyl-[lipoprotein] + a glycerophospholipid = N-acyl-S-1,2-diacyl-sn-glyceryl-L-cysteinyl-[lipoprotein] + a 2-acyl-sn-glycero-3-phospholipid + H(+). Its pathway is protein modification; lipoprotein biosynthesis (N-acyl transfer). Functionally, catalyzes the phospholipid dependent N-acylation of the N-terminal cysteine of apolipoprotein, the last step in lipoprotein maturation. The polypeptide is Apolipoprotein N-acyltransferase (Wolinella succinogenes (strain ATCC 29543 / DSM 1740 / CCUG 13145 / JCM 31913 / LMG 7466 / NCTC 11488 / FDC 602W) (Vibrio succinogenes)).